We begin with the raw amino-acid sequence, 506 residues long: Bifunctional purine biosynthesis protein PurH (506 aa).

The 142-residue stretch at 1 to 142 (MRAIISVYRK…KNFFRVVILV (142 aa)) folds into the MGS-like domain.

Belongs to the PurH family.

The catalysed reaction is (6R)-10-formyltetrahydrofolate + 5-amino-1-(5-phospho-beta-D-ribosyl)imidazole-4-carboxamide = 5-formamido-1-(5-phospho-D-ribosyl)imidazole-4-carboxamide + (6S)-5,6,7,8-tetrahydrofolate. It carries out the reaction IMP + H2O = 5-formamido-1-(5-phospho-D-ribosyl)imidazole-4-carboxamide. The protein operates within purine metabolism; IMP biosynthesis via de novo pathway; 5-formamido-1-(5-phospho-D-ribosyl)imidazole-4-carboxamide from 5-amino-1-(5-phospho-D-ribosyl)imidazole-4-carboxamide (10-formyl THF route): step 1/1. It participates in purine metabolism; IMP biosynthesis via de novo pathway; IMP from 5-formamido-1-(5-phospho-D-ribosyl)imidazole-4-carboxamide: step 1/1. The sequence is that of Bifunctional purine biosynthesis protein PurH from Aquifex aeolicus (strain VF5).